We begin with the raw amino-acid sequence, 1734 residues long: Protein TIC 214 (1734 aa).

6 helical membrane passes run 19 to 39 (IINS…FSIG), 68 to 88 (FIAG…HLAL), 91 to 111 (PHTI…WNNH), 133 to 153 (VFLN…SSML), 176 to 196 (VGWL…LVWI), and 227 to 247 (IFSI…PSPI). Positions 1433–1485 (NLNNEEKELADEVELESDNEKQINPESALSNQEKTIQEIYAESKKKKRQNKKQ) form a coiled coil.

This sequence belongs to the TIC214 family. Part of the Tic complex.

It localises to the plastid. Its subcellular location is the chloroplast inner membrane. Functionally, involved in protein precursor import into chloroplasts. May be part of an intermediate translocation complex acting as a protein-conducting channel at the inner envelope. This Lepidium virginicum (Virginia pepperweed) protein is Protein TIC 214.